Consider the following 421-residue polypeptide: Histidine--tRNA ligase (421 aa).

The protein belongs to the class-II aminoacyl-tRNA synthetase family. As to quaternary structure, homodimer.

The protein localises to the cytoplasm. It carries out the reaction tRNA(His) + L-histidine + ATP = L-histidyl-tRNA(His) + AMP + diphosphate + H(+). The protein is Histidine--tRNA ligase of Francisella tularensis subsp. holarctica (strain LVS).